Here is a 492-residue protein sequence, read N- to C-terminus: Bifunctional purine biosynthesis protein PurH (492 aa).

The MGS-like domain occupies 1–144 (MKKAILSVSN…KNYKHVTTIV (144 aa)).

It belongs to the PurH family.

The catalysed reaction is (6R)-10-formyltetrahydrofolate + 5-amino-1-(5-phospho-beta-D-ribosyl)imidazole-4-carboxamide = 5-formamido-1-(5-phospho-D-ribosyl)imidazole-4-carboxamide + (6S)-5,6,7,8-tetrahydrofolate. The enzyme catalyses IMP + H2O = 5-formamido-1-(5-phospho-D-ribosyl)imidazole-4-carboxamide. It functions in the pathway purine metabolism; IMP biosynthesis via de novo pathway; 5-formamido-1-(5-phospho-D-ribosyl)imidazole-4-carboxamide from 5-amino-1-(5-phospho-D-ribosyl)imidazole-4-carboxamide (10-formyl THF route): step 1/1. The protein operates within purine metabolism; IMP biosynthesis via de novo pathway; IMP from 5-formamido-1-(5-phospho-D-ribosyl)imidazole-4-carboxamide: step 1/1. This is Bifunctional purine biosynthesis protein PurH from Staphylococcus aureus (strain MRSA252).